We begin with the raw amino-acid sequence, 271 residues long: NADPH-dependent 7-cyano-7-deazaguanine reductase (271 aa).

Ile79 to Ser81 provides a ligand contact to substrate. Ser81–Lys82 contributes to the NADPH binding site. The active-site Thioimide intermediate is the Cys178. The active-site Proton donor is Asp185. His217–Glu218 is a binding site for substrate. Residue Arg246–Gly247 coordinates NADPH.

It belongs to the GTP cyclohydrolase I family. QueF type 2 subfamily. As to quaternary structure, homodimer.

It localises to the cytoplasm. It carries out the reaction 7-aminomethyl-7-carbaguanine + 2 NADP(+) = 7-cyano-7-deazaguanine + 2 NADPH + 3 H(+). It functions in the pathway tRNA modification; tRNA-queuosine biosynthesis. In terms of biological role, catalyzes the NADPH-dependent reduction of 7-cyano-7-deazaguanine (preQ0) to 7-aminomethyl-7-deazaguanine (preQ1). The polypeptide is NADPH-dependent 7-cyano-7-deazaguanine reductase (Acinetobacter baylyi (strain ATCC 33305 / BD413 / ADP1)).